A 427-amino-acid polypeptide reads, in one-letter code: UDP-N-acetyl-D-mannosamine dehydrogenase (427 aa).

Positions 20, 21, 40, 45, 92, and 130 each coordinate NAD(+). UDP-N-acetyl-alpha-D-mannosaminouronate-binding residues include arginine 157, valine 158, lysine 209, asparagine 213, arginine 216, histidine 247, arginine 249, and glycine 260. Catalysis depends on lysine 209, which acts as the Proton donor/acceptor. The active-site Nucleophile is the cysteine 263. Positions 317 and 318 each coordinate UDP-N-acetyl-alpha-D-mannosaminouronate. NAD(+) is bound at residue arginine 325. Lysine 403 serves as a coordination point for UDP-N-acetyl-alpha-D-mannosaminouronate.

Belongs to the UDP-glucose/GDP-mannose dehydrogenase family. In terms of assembly, homotetramer; probably dimer of dimers.

The enzyme catalyses UDP-N-acetyl-alpha-D-mannosamine + 2 NAD(+) + H2O = UDP-N-acetyl-alpha-D-mannosaminouronate + 2 NADH + 3 H(+). Its function is as follows. Catalyzes the four-electron oxidation of UDP-N-acetyl-D-mannosamine (UDP-ManNAc), reducing NAD(+) and releasing UDP-N-acetylmannosaminuronic acid (UDP-ManNAcA). The chain is UDP-N-acetyl-D-mannosamine dehydrogenase (wecC) from Methanocaldococcus jannaschii (strain ATCC 43067 / DSM 2661 / JAL-1 / JCM 10045 / NBRC 100440) (Methanococcus jannaschii).